The sequence spans 166 residues: MTRKQKRLALIASGAVVVSLAVGLVMFALRDNIVFFYSPTELAEKPATNGARLRIGGLVKPASLDRQGDQTVRFTVTDMKHDVAVTYTGLLPDLFREGQGVVAEGALRPDGVFHADSVLAKHDERYMPREVADALKKQGVWQEEGKSEGKPSAIPAQTAPQGAQAY.

The Cytoplasmic portion of the chain corresponds to 1 to 7 (MTRKQKR). A helical; Signal-anchor for type II membrane protein transmembrane segment spans residues 8 to 28 (LALIASGAVVVSLAVGLVMFA). The Periplasmic segment spans residues 29–166 (LRDNIVFFYS…QTAPQGAQAY (138 aa)). Heme is bound by residues histidine 122 and tyrosine 126. Residues 139 to 166 (GVWQEEGKSEGKPSAIPAQTAPQGAQAY) form a disordered region.

It belongs to the CcmE/CycJ family.

The protein resides in the cell inner membrane. Heme chaperone required for the biogenesis of c-type cytochromes. Transiently binds heme delivered by CcmC and transfers the heme to apo-cytochromes in a process facilitated by CcmF and CcmH. This Methylocella silvestris (strain DSM 15510 / CIP 108128 / LMG 27833 / NCIMB 13906 / BL2) protein is Cytochrome c-type biogenesis protein CcmE.